The chain runs to 363 residues: Type-2 angiotensin II receptor (363 aa).

At 1–45 (MKDNFSFAATSRNITSSLPFVNLNMSGTNDLIFNCSHKPSDKHLE) the chain is on the extracellular side. Asn-4, Asn-13, Asn-24, and Asn-34 each carry an N-linked (GlcNAc...) asparagine glycan. 2 disulfide bridges follow: Cys-35-Cys-290 and Cys-117-Cys-195. The helical transmembrane segment at 46–70 (AIPVLYYLIFVIGFAVNIIVVSLFC) threads the bilayer. Residues 71-80 (CQKGPKKVSS) are Cytoplasmic-facing. The chain crosses the membrane as a helical span at residues 81 to 104 (IYIFNLAVADLLLLATLPLWATYY). 2 residues coordinate angiotensin II: Tyr-103 and Tyr-104. The Extracellular segment spans residues 105 to 114 (SYRYDWLFGP). The chain crosses the membrane as a helical span at residues 115–140 (VMCKVFGSFLTLNMFASIFFITCMSV). Over 141-159 (DRYQSVIYPFLSQRRNPWQ) the chain is Cytoplasmic. Residues 160–181 (ASYVVPLVWCMACLSSLPTFYF) traverse the membrane as a helical segment. Angiotensin II is bound by residues Arg-182, Tyr-204, and Lys-215. At 182 to 206 (RDVRTIEYLGVNACVMAFPPEKYAQ) the chain is on the extracellular side. Residues 207–232 (WSAGIALMKNVLGFIIPLIFIATCYF) traverse the membrane as a helical segment. Topologically, residues 233–257 (GIRKHLLKTNSYGKNRITRDQVLKM) are cytoplasmic. Residues 258 to 281 (AAAVVLAFIICWLPFHVLTFLDAL) form a helical membrane-spanning segment. Asp-279 lines the angiotensin II pocket. Residues 282–294 (SWMGIINSCEVMA) are Extracellular-facing. A helical membrane pass occupies residues 295 to 320 (VIDLALPFAILLGFTNSCVNPFLYCF). Residue Asp-297 coordinates angiotensin II. Residues 321–363 (VGNRFQQKLRSMFRVPITWLQGKRETMSCRKSSSLREMDTFVS) lie on the Cytoplasmic side of the membrane. The helix VIII stretch occupies residues 324-333 (RFQQKLRSMF). Ser-354 bears the Phosphoserine; by PKC mark.

This sequence belongs to the G-protein coupled receptor 1 family. In terms of assembly, interacts with MTUS1.

Its subcellular location is the cell membrane. In terms of biological role, receptor for angiotensin II, a vasoconstricting peptide. Signals primarily via a non-canonical G-protein- and beta-arrestin independent pathways. Cooperates with MTUS1 to inhibit ERK2 activation and cell proliferation. This Meriones unguiculatus (Mongolian jird) protein is Type-2 angiotensin II receptor (AGTR2).